A 397-amino-acid chain; its full sequence is DNA excision repair protein ERCC-8 (397 aa).

WD repeat units follow at residues 41-81 (IHGS…RQPH), 97-137 (VHKY…AADV), 184-224 (GHRQ…GCLL), 243-282 (AHNG…NTLV), and 332-371 (GHYK…PVPD). Phosphoserine is present on residues Ser391, Ser392, and Ser393.

In terms of assembly, part of the CSA complex (also named DCX(ERCC8) complex), a DCX E3 ubiquitin-protein ligase complex containing ERCC8, RBX1, DDB1 and CUL4A; the CSA complex interacts with RNA polymerase II; upon UV irradiation it interacts with the COP9 signalosome and preferentially with the hyperphosphorylated form of RNA polymerase II. Interacts with ERCC6/CSB (via CIM motif); promoting recruitment to lesion-stalled RNA polymerase II (Pol II). Interacts with KIAA1530/UVSSA. Interacts with a subunit of RNA polymerase II TFIIH.

The protein resides in the nucleus. Its subcellular location is the chromosome. It localises to the nucleus matrix. The protein operates within protein modification; protein ubiquitination. Functionally, substrate-recognition component of the CSA complex, a DCX (DDB1-CUL4-X-box) E3 ubiquitin-protein ligase complex, involved in transcription-coupled nucleotide excision repair (TC-NER), a process during which RNA polymerase II-blocking lesions are rapidly removed from the transcribed strand of active genes. Following recruitment to lesion-stalled RNA polymerase II (Pol II), the CSA complex mediates ubiquitination of Pol II subunit POLR2A/RPB1 at 'Lys-1268', a critical TC-NER checkpoint, governing RNA Pol II stability and initiating DNA damage excision by TFIIH recruitment. The CSA complex also promotes the ubiquitination and subsequent proteasomal degradation of ERCC6/CSB in a UV-dependent manner; ERCC6 degradation is essential for the recovery of RNA synthesis after transcription-coupled repair. Also plays a role in DNA double-strand breaks (DSSBs) repair by non-homologous end joining (NHEJ). This is DNA excision repair protein ERCC-8 from Mus musculus (Mouse).